The chain runs to 219 residues: GTP-binding nuclear protein GSP1/CNR1 (219 aa).

The residue at position 2 (Ser-2) is an N-acetylserine. Ser-2 carries the phosphoserine modification. One can recognise a Small GTPase Ran-type domain in the interval 9-173 (EVPTFKLVLV…LWLARKLAGN (165 aa)). 20–27 (DGGTGKTT) is a binding site for GTP. Residues 39 to 47 (KKYIATIGV) are switch-I. GTP contacts are provided by residues Gly-70, 124–127 (NKVD), and 152–154 (SAK). Residues 70-86 (GQEKFGGLRDGYYINAQ) are switch-II.

This sequence belongs to the small GTPase superfamily. Ran family. Found in a nuclear export complex with RanGTP, exportin and pre-miRNA. Forms a complex with YRB1. Interacts with BUD5, CEX1, RRP12, SRM1, and DIS3/RRP44.

The protein resides in the nucleus. GTP-binding protein involved in nucleocytoplasmic transport. Required for the import of protein into the nucleus and also for RNA export. Essential for cell viability. By analogy with Ras, Ran may be activated when GTP is exchanged for bound GDP by RCC1 and inactivated when GTP is hydrolyzed by Ran upon activation by RanGAP1. In Saccharomyces cerevisiae (strain ATCC 204508 / S288c) (Baker's yeast), this protein is GTP-binding nuclear protein GSP1/CNR1 (GSP1).